The primary structure comprises 568 residues: Proline--tRNA ligase (568 aa).

It belongs to the class-II aminoacyl-tRNA synthetase family. ProS type 1 subfamily. In terms of assembly, homodimer.

It localises to the cytoplasm. The enzyme catalyses tRNA(Pro) + L-proline + ATP = L-prolyl-tRNA(Pro) + AMP + diphosphate. Functionally, catalyzes the attachment of proline to tRNA(Pro) in a two-step reaction: proline is first activated by ATP to form Pro-AMP and then transferred to the acceptor end of tRNA(Pro). As ProRS can inadvertently accommodate and process non-cognate amino acids such as alanine and cysteine, to avoid such errors it has two additional distinct editing activities against alanine. One activity is designated as 'pretransfer' editing and involves the tRNA(Pro)-independent hydrolysis of activated Ala-AMP. The other activity is designated 'posttransfer' editing and involves deacylation of mischarged Ala-tRNA(Pro). The misacylated Cys-tRNA(Pro) is not edited by ProRS. This chain is Proline--tRNA ligase, found in Campylobacter jejuni subsp. jejuni serotype O:6 (strain 81116 / NCTC 11828).